The primary structure comprises 447 residues: Argininosuccinate synthase (447 aa).

ATP-binding positions include 17–25 (AFSGGLDTS) and alanine 43. Tyrosine 99 contacts L-citrulline. Positions 129 and 131 each coordinate ATP. L-aspartate is bound by residues threonine 131, asparagine 135, and aspartate 136. Asparagine 135 is an L-citrulline binding site. Aspartate 136 is a binding site for ATP. Residues arginine 139 and serine 192 each contribute to the L-citrulline site. An ATP-binding site is contributed by aspartate 194. Threonine 201, glutamate 203, and glutamate 280 together coordinate L-citrulline.

This sequence belongs to the argininosuccinate synthase family. Type 2 subfamily. In terms of assembly, homotetramer.

It is found in the cytoplasm. The catalysed reaction is L-citrulline + L-aspartate + ATP = 2-(N(omega)-L-arginino)succinate + AMP + diphosphate + H(+). It functions in the pathway amino-acid biosynthesis; L-arginine biosynthesis; L-arginine from L-ornithine and carbamoyl phosphate: step 2/3. In Citrobacter koseri (strain ATCC BAA-895 / CDC 4225-83 / SGSC4696), this protein is Argininosuccinate synthase.